A 1014-amino-acid polypeptide reads, in one-letter code: DNA translocase FtsK 2 (1014 aa).

Residues 1-21 (MFWIVLIVILLLALAGLFFVR) form a helical membrane-spanning segment. Disordered stretches follow at residues 89-142 (ESEP…EDIA), 283-318 (RHAG…RRRV), and 487-525 (SQAV…AVSE). Residues 121-140 (EEAETEEAEAAEEEAADTED) show a composition bias toward acidic residues. A compositionally biased stretch (polar residues) spans 298–307 (DVSQGQSVSD). Residues 662–871 (GQPVVTDLGK…FQVSSKIDSR (210 aa)) form the FtsK domain. 682–687 (GSGKSV) contacts ATP.

Belongs to the FtsK/SpoIIIE/SftA family. In terms of assembly, homohexamer. Forms a ring that surrounds DNA.

Its subcellular location is the cell inner membrane. Essential cell division protein that coordinates cell division and chromosome segregation. The N-terminus is involved in assembly of the cell-division machinery. The C-terminus functions as a DNA motor that moves dsDNA in an ATP-dependent manner towards the dif recombination site, which is located within the replication terminus region. Translocation stops specifically at Xer-dif sites, where FtsK interacts with the Xer recombinase, allowing activation of chromosome unlinking by recombination. FtsK orienting polar sequences (KOPS) guide the direction of DNA translocation. FtsK can remove proteins from DNA as it translocates, but translocation stops specifically at XerCD-dif site, thereby preventing removal of XerC and XerD from dif. The polypeptide is DNA translocase FtsK 2 (ftsK2) (Neisseria meningitidis serogroup A / serotype 4A (strain DSM 15465 / Z2491)).